The chain runs to 966 residues: DNA mismatch repair protein MutS (966 aa).

Residue 709 to 716 (GPNMAGKS) coordinates ATP. Positions 894 to 914 (EGQRPPSSPAQPPAPPAPVVV) are disordered. A compositionally biased stretch (pro residues) spans 899-912 (PSSPAQPPAPPAPV).

The protein belongs to the DNA mismatch repair MutS family.

Its function is as follows. This protein is involved in the repair of mismatches in DNA. It is possible that it carries out the mismatch recognition step. This protein has a weak ATPase activity. This is DNA mismatch repair protein MutS from Chloroflexus aurantiacus (strain ATCC 29366 / DSM 635 / J-10-fl).